Consider the following 388-residue polypeptide: Succinate--CoA ligase [ADP-forming] subunit beta (388 aa).

The ATP-grasp domain occupies 9 to 244 (KQLFSRYGLP…PSQEDPREAQ (236 aa)). Residues lysine 46, 53–55 (GRG), glutamate 99, threonine 102, and glutamate 107 each bind ATP. Positions 199 and 213 each coordinate Mg(2+). Substrate contacts are provided by residues asparagine 264 and 321–323 (GIV).

Belongs to the succinate/malate CoA ligase beta subunit family. In terms of assembly, heterotetramer of two alpha and two beta subunits. Mg(2+) is required as a cofactor.

The catalysed reaction is succinate + ATP + CoA = succinyl-CoA + ADP + phosphate. The enzyme catalyses GTP + succinate + CoA = succinyl-CoA + GDP + phosphate. The protein operates within carbohydrate metabolism; tricarboxylic acid cycle; succinate from succinyl-CoA (ligase route): step 1/1. Functionally, succinyl-CoA synthetase functions in the citric acid cycle (TCA), coupling the hydrolysis of succinyl-CoA to the synthesis of either ATP or GTP and thus represents the only step of substrate-level phosphorylation in the TCA. The beta subunit provides nucleotide specificity of the enzyme and binds the substrate succinate, while the binding sites for coenzyme A and phosphate are found in the alpha subunit. The sequence is that of Succinate--CoA ligase [ADP-forming] subunit beta from Proteus mirabilis (strain HI4320).